The sequence spans 140 residues: uncharacterized protein (140 aa).

18–25 (GTNGSGKS) is a binding site for ATP.

This is an uncharacterized protein from Haemophilus influenzae (strain ATCC 51907 / DSM 11121 / KW20 / Rd).